A 180-amino-acid chain; its full sequence is ATP-dependent protease subunit HslV (180 aa).

T8 is an active-site residue. The Na(+) site is built by A165, C168, and T171.

The protein belongs to the peptidase T1B family. HslV subfamily. As to quaternary structure, a double ring-shaped homohexamer of HslV is capped on each side by a ring-shaped HslU homohexamer. The assembly of the HslU/HslV complex is dependent on binding of ATP.

The protein resides in the cytoplasm. It carries out the reaction ATP-dependent cleavage of peptide bonds with broad specificity.. Allosterically activated by HslU binding. In terms of biological role, protease subunit of a proteasome-like degradation complex believed to be a general protein degrading machinery. The sequence is that of ATP-dependent protease subunit HslV from Staphylococcus epidermidis (strain ATCC 12228 / FDA PCI 1200).